Reading from the N-terminus, the 442-residue chain is Protein bangles and beads (442 aa).

Residues 47–442 (AVEPAPLKPE…SEESSESKEN (396 aa)) form a disordered region. Composition is skewed to basic and acidic residues over residues 55-67 (PEAE…KTIE), 114-125 (PEKKTLPEEAKP), and 133-146 (EAEK…RTEA). Low complexity predominate over residues 159 to 172 (AIEQAPEAPAANAE). 2 stretches are compositionally biased toward basic and acidic residues: residues 177 to 194 (VVDE…KSAE) and 204 to 240 (AEKE…EPAK). Low complexity-rich tracts occupy residues 241-255 (AAEA…AATK) and 272-288 (SSPA…AAQA). Basic and acidic residues predominate over residues 329 to 339 (EAVKEQEKEQP). A compositionally biased stretch (low complexity) spans 357 to 376 (TAAPAGAPEPTAAVAPAAVP). Residues 408–442 (EPKKSSEEKSDKSESKVDESSESKESEESSESKEN) show a composition bias toward basic and acidic residues. Phosphoserine is present on residues serine 430, serine 433, serine 436, and serine 437.

Expressed in the embryonic CNS, in sets of cells that are segmentally reiterated along the periphery of the nervous system.

Its function is as follows. May play an important role during development. This chain is Protein bangles and beads (bnb), found in Drosophila melanogaster (Fruit fly).